The following is a 54-amino-acid chain: uncharacterized protein (54 aa).

This is an uncharacterized protein from Saccharomyces cerevisiae (strain ATCC 204508 / S288c) (Baker's yeast).